The following is an 835-amino-acid chain: Replication origin-binding protein (835 aa).

One can recognise a Helicase ATP-binding domain in the interval 54–215 (PGMSQTRPVT…SGLRGDENIH (162 aa)). Residue 67–74 (APMGSGKT) participates in ATP binding.

The protein belongs to the herpesviridae OriBP family. In terms of assembly, homodimer. Interacts with the major DNA-binding protein. Interacts with the helicase/primase component 52 and the polymerase accessory protein.

Its subcellular location is the host nucleus. Functionally, functions as a docking protein to recruit essential components of the viral replication machinery to viral DNA origins. In the presence of the major DNA-binding protein, opens dsDNA leading to a conformational change in the origin that facilitates DNA unwinding and subsequent replication. This Varicella-zoster virus (strain Oka vaccine) (HHV-3) protein is Replication origin-binding protein.